Here is a 445-residue protein sequence, read N- to C-terminus: Hydroxymethylglutaryl-CoA synthase (445 aa).

Aspartate 31 contributes to the (3S)-3-hydroxy-3-methylglutaryl-CoA binding site. Glutamate 83 acts as the Proton donor/acceptor in catalysis. (3S)-3-hydroxy-3-methylglutaryl-CoA is bound by residues cysteine 120, threonine 163, serine 211, histidine 244, lysine 253, asparagine 328, and serine 364. Catalysis depends on cysteine 120, which acts as the Acyl-thioester intermediate. Histidine 244 functions as the Proton donor/acceptor in the catalytic mechanism.

Belongs to the thiolase-like superfamily. HMG-CoA synthase family.

It carries out the reaction acetoacetyl-CoA + acetyl-CoA + H2O = (3S)-3-hydroxy-3-methylglutaryl-CoA + CoA + H(+). Its pathway is metabolic intermediate biosynthesis; (R)-mevalonate biosynthesis; (R)-mevalonate from acetyl-CoA: step 2/3. Its activity is regulated as follows. In contrast to bacterial and eukaryotic HMG-CoA synthases, is insensitive to feedback substrate inhibition by acetoacetyl-CoA. Enzymatic activity is inhibited by hymeglusin, which also blocks the propagation of H.volcanii cells in vivo, indicating the critical role that the mevalonate pathway plays in isoprenoid biosynthesis by these archaea. Functionally, catalyzes the condensation of acetyl-CoA with acetoacetyl-CoA to form 3-hydroxy-3-methylglutaryl-CoA (HMG-CoA). Functions in the mevalonate (MVA) pathway leading to isopentenyl diphosphate (IPP), a key precursor for the biosynthesis of isoprenoid compounds such as archaeal membrane lipids. This is Hydroxymethylglutaryl-CoA synthase (hmgB) from Haloferax volcanii (strain ATCC 29605 / DSM 3757 / JCM 8879 / NBRC 14742 / NCIMB 2012 / VKM B-1768 / DS2) (Halobacterium volcanii).